We begin with the raw amino-acid sequence, 672 residues long: Glycine--tRNA ligase beta subunit (672 aa).

It belongs to the class-II aminoacyl-tRNA synthetase family. Tetramer of two alpha and two beta subunits.

Its subcellular location is the cytoplasm. The catalysed reaction is tRNA(Gly) + glycine + ATP = glycyl-tRNA(Gly) + AMP + diphosphate. The polypeptide is Glycine--tRNA ligase beta subunit (Thermotoga petrophila (strain ATCC BAA-488 / DSM 13995 / JCM 10881 / RKU-1)).